The chain runs to 369 residues: Methionine aminopeptidase 1B, chloroplastic (369 aa).

A chloroplast-targeting transit peptide spans 1-61 (MASSVFLSSF…YSPRQFHVSA (61 aa)). His-199 is a binding site for substrate. The a divalent metal cation site is built by Asp-216, Asp-227, and His-290. Residue His-297 participates in substrate binding. A divalent metal cation is bound by residues Glu-322 and Glu-353.

Belongs to the peptidase M24A family. Methionine aminopeptidase type 1 subfamily. The cofactor is Co(2+). It depends on Zn(2+) as a cofactor. Mn(2+) serves as cofactor. Requires Fe(2+) as cofactor. Ubiquitous. Preferentially expressed in green tissues.

It is found in the plastid. The protein resides in the chloroplast. It carries out the reaction Release of N-terminal amino acids, preferentially methionine, from peptides and arylamides.. Functionally, removes the N-terminal methionine from nascent proteins. The N-terminal methionine is often cleaved when the second residue in the primary sequence is small and uncharged (Met-Ala-, Cys, Gly, Pro, Ser, Thr, or Val). The polypeptide is Methionine aminopeptidase 1B, chloroplastic (MAP1B) (Arabidopsis thaliana (Mouse-ear cress)).